A 231-amino-acid chain; its full sequence is Antiholin-like protein LrgB (231 aa).

5 helical membrane-spanning segments follow: residues 7–24 (PYFG…GTFL), 34–56 (FTPL…FSYA), 91–113 (WWQI…YLLA), 149–171 (ITAF…FLKV), and 207–229 (ASIA…VQLI).

This sequence belongs to the CidB/LrgB family. LrgB subfamily.

It is found in the cell membrane. Its function is as follows. Inhibits the expression or activity of extracellular murein hydrolases by interacting, possibly with LrgA, with the holin-like protein CidA. The LrgAB and CidA proteins may affect the proton motive force of the membrane. May be involved in programmed cell death (PCD), possibly triggering PCD in response to antibiotics and environmental stresses. This chain is Antiholin-like protein LrgB, found in Bacillus subtilis (strain 168).